The sequence spans 51 residues: Ribosomal protein eL39-like 2 (51 aa).

This sequence belongs to the eukaryotic ribosomal protein eL39 family. In terms of assembly, component of a male germ cell-specific 60S large ribosomal subunit (LSU), which contains RPL10L and RPL39L, instead of RPL10 and RPL39 paralogs. The composition of the rest of the complex is similar to classical ribosomes. As to expression, testis specific.

Its subcellular location is the cytoplasm. Its function is as follows. Male germ cell-specific component of the ribosome, which is required for the formation of sperm and male fertility. Replaces the RPL39 paralog in the ribosome of male germ cells. The ribosome is a large ribonucleoprotein complex responsible for the synthesis of proteins in the cell. The male germ cell-specific ribosome displays a ribosomal polypeptide exit tunnel of distinct size and charge states compared with the classical ribosome. It is responsible for regulating the biosynthesis and folding of a subset of male germ-cell-specific proteins that are essential for the formation of sperm. This Homo sapiens (Human) protein is Ribosomal protein eL39-like 2.